Reading from the N-terminus, the 599-residue chain is MKKSLLCSTLALAVASAAQAAPKTVDIMVLYTPAATQTANGRDIDARIASYIEFANTAYEKSGVNLRLRLVHKQRLDWADYPTVTGANLDRFMRDPQVQRLREQYGADLVSLVNRSQNSGNGYITCGIGYMGSGDKNSGRFHGNAKDIAYNLTGVDCGLNTFAHEAGHNMGLRHSYEQDLESSYYDPRYAHSGTYEWSRGYGVQGRFATVMAYPHAFGTNKQAPFFANPRLVNAECANQPCGREEHADAVRALNSMATQIADFRPTKVPGTVNPGSGGDTPTPPDLPWCTKAKLGGLLGDGEFASMEGWRAWSGNAQLSLVNVAKGCRDNALLVDVRGFDLLVRPIAPLRAGSGYRLSGKVMLKAANTRETVRMALLSERADGALAYNPAQSVELSVSGNEFSRLEKTFDYRPAADQRNLYVAVWSDSGASLLVDEMNLQEAQAAPPSVPPAPKRIAYDFESGIGGWSGVHASARATRVASAGRLALEAYQRRYAGTGASTSLLGNLEAGRTYAFSADVRVGDGRGSQAMTYAYLYLESQGRPGEYLPLGYKVVENGRWASLRGQVQLPKGPIKRAELMILSGNQQESMFIDNVQLLQK.

The signal sequence occupies residues 1–20; the sequence is MKKSLLCSTLALAVASAAQA. Histidine 164 contacts Zn(2+). Glutamate 165 is a catalytic residue. Histidine 168 and histidine 174 together coordinate Zn(2+). The interval 265–285 is disordered; the sequence is PTKVPGTVNPGSGGDTPTPPD. The CBM-cenC domain occupies 458–583; sequence YDFESGIGGW…KRAELMILSG (126 aa).

This sequence belongs to the peptidase M72 family. Interacts with BamI, the product of its coregulated adjacent gene, which inhibits its protease activity. Requires Zn(2+) as cofactor. Post-translationally, made as a membrane-associated pre-pro-protein, which is exported to the periplasm with removal of the signal peptide, leading to a protein with a molecular mass of 65 kDa, that likely contains the metzincin domain plus tandem carbohydrate-binding domains. Undergoes processing during export to the extracellular milieu, probably by autocatalysis, yielding a (mature length) 25 kDa protein that most likely corresponds to the metzincin domain only.

The protein localises to the secreted. The catalysed reaction is Cleavage of Xaa-|-Asp, Xaa-|-Glu and Xaa-|-cysteic acid bonds.. Its activity is regulated as follows. Is inhibited by BamI, the product of its coregulated adjacent gene. Its function is as follows. Metalloprotease with endopeptidase activity. Specifically cleaves on the N-terminal side of aspartyl, glutamyl and cysteic acid residues. Mep72 appears to be a secreted biofilm-specific regulator that affects the processing of a very specific subset of virulence factors exported by the type III secretion machinery as well as flagellar proteins. Binds directly to ExoS and PcrV and affects the processing of these proteins in the biofilm secretome, but contrary to expectation, Mep72 seems to protect these targets against proteolytic processing/degradation. The chain is Peptidyl-Asp metalloendopeptidase from Pseudomonas aeruginosa (strain ATCC 15692 / DSM 22644 / CIP 104116 / JCM 14847 / LMG 12228 / 1C / PRS 101 / PAO1).